A 605-amino-acid polypeptide reads, in one-letter code: MTIEKEIEGLIHKTNKDLLNENANKDSRVFPTQRDLMAGIVSKHIAKNMVPSFIMKAHESGIIHVHDIDYSPALPFTNCCLVDLKGMLENGFKLGNAQIETPKSIGVATAIMAQITAQVASHQYGGTTFANVDKVLSPYVKRTYAKHIEDAEKWQIADALNYAQSKTEKDVYDAFQAYEYEVNTLFSSNGQTPFVTITFGTGTDWTERMIQKAILKNRIKGLGRDGITPIFPKLVMFVEEGVNLYKDDPNYDIKQLALECASKRMYPDIISAKNNKAITGSSVPVSPMGCRSFLSVWKDSTGNEILDGRNNLGVVTLNLPRIALDSYIGTQFNEQKFVELFNERMDLCFEALMCRISSLKGVKATVAPILYQEGAFGVRLKPDDDIIELFKNGRSSVSLGYIGIHELNILVGRDIGREILTKMNAHLKQWTERTGFAFSLYSTPAENLCYRFCKLDTEKYGSVKDVTDKGWYTNSFHVSVEENITPFEKISREAPYHFIATGGHISYVELPDMKNNLKGLEAVWDYAAQHLDYFGVNMPVDKCFTCGSTHEMTPTENGFVCSICGETDPKKMNTIRRTCGYLGNPNERGFNLGKNKEIMHRVKHQ.

DCTP-binding residues include histidine 64 and histidine 66. Histidine 64, histidine 66, aspartate 67, glutamate 100, and lysine 103 together coordinate dGTP. Residues glutamate 100, lysine 103, glutamine 114, lysine 146, and 445–448 (AENL) contribute to the dCTP site. DATP contacts are provided by glutamate 100, lysine 103, glutamine 114, and lysine 146. Residue glutamate 100 participates in dTTP binding. DTTP-binding residues include glutamine 114 and lysine 146. Positions 146, 447, and 448 each coordinate dGTP. The region spanning 482 to 605 (ENITPFEKIS…KEIMHRVKHQ (124 aa)) is the Glycine radical domain. Positions 543, 546, 561, and 564 each coordinate Zn(2+). At glycine 580 the chain carries Glycine radical.

The protein belongs to the anaerobic ribonucleoside-triphosphate reductase family. In terms of assembly, homodimer. Forms a tetramer composed of two NrdD and two NrdG subunits.

It catalyses the reaction a ribonucleoside 5'-triphosphate + formate + H(+) = a 2'-deoxyribonucleoside 5'-triphosphate + CO2 + H2O. With respect to regulation, activated under anaerobic conditions by NrdG, a tightly associated activase. Activation involves the formation of a glycyl radical at Gly-580. Functionally, catalyzes the conversion of ribonucleotides into deoxyribonucleotides, which are required for DNA synthesis and repair. This Enterobacteria phage T4 (Bacteriophage T4) protein is Anaerobic ribonucleoside-triphosphate reductase.